The following is a 384-amino-acid chain: Protein V (384 aa).

Disordered regions lie at residues 1 to 23 (MDQDAFILKEDSEVEREAPGGRE) and 38 to 318 (SEPT…KKGH). Positions 7–20 (ILKEDSEVEREAPG) are enriched in basic and acidic residues. The segment covering 50 to 59 (LHNTINTPQG) has biased composition (polar residues). The residue at position 68 (Ser-68) is a Phosphoserine; by host. The segment covering 83-101 (RSGEESRVSGRTSKPEAEA) has biased composition (basic and acidic residues). Ser-125 carries the phosphoserine; by host modification. The segment covering 150–168 (GIEDENREMAAHPDKRGED) has biased composition (basic and acidic residues). Residues 191–206 (ASNNGRSMEPGSSHSA) show a composition bias toward polar residues. Ser-192, Ser-249, Ser-257, and Ser-260 each carry phosphoserine; by host. The Zn(2+) site is built by His-318, Cys-337, Cys-341, Cys-353, Cys-355, Cys-358, Cys-362, and Cys-365.

This sequence belongs to the paramyxoviruses V protein family. In terms of assembly, interacts with host IFIH1/MDA5 and DHX58/LGP2. Interacts with host IRF3. Interacts with host RIGI regulatory protein (via CARDs domain) and host TRIM25 (via SPRY domain); these interactions prevent TRIM25-mediated ubiquitination of RIG-I and disrupts downstream RIG-I signaling.

It is found in the host cytoplasm. In terms of biological role, plays an essential role in the inhibition of host immune response. Prevents the establishment of cellular antiviral state by blocking interferon-alpha/beta (IFN-alpha/beta) production and signaling pathway. Interacts with host IFIH1/MDA5 and DHX58/LGP2 to inhibit the transduction pathway involved in the activation of IFN-beta promoter, thus protecting the virus against cell antiviral state. Also interacts with and inhibits host IRF3. Blocks the type I interferon signaling pathway by disrupting the RIG-I signaling pathway. This chain is Protein V (P/V/C), found in Sendai virus (strain Harris) (SeV).